Consider the following 1026-residue polypeptide: UPF0182 protein FRAAL6027 (1026 aa).

The next 7 membrane-spanning stretches (helical) occupy residues 13–33 (AKVI…VAIF), 60–80 (ILLF…NIVL), 108–128 (YMKL…GLSA), 167–187 (FLLG…VLTH), 208–228 (AHIS…YYLD), 250–270 (AVLP…VLFI), and 283–303 (LGAG…PAFI). The span at 877–888 (AAAGAGTGATTT) shows a compositional bias: low complexity. 2 disordered regions span residues 877 to 916 (AAAG…LQDA) and 958 to 1026 (LASP…PPPG). Over residues 889-903 (TGGGGQATTQGGGTG) the composition is skewed to gly residues. Positions 970 to 1001 (PTPSRSAAPTTRGTAAGSAPPGTTPAVAAPAG) are enriched in low complexity. The segment covering 1016–1026 (PQQPRAAPPPG) has biased composition (pro residues).

It belongs to the UPF0182 family.

The protein localises to the cell membrane. This is UPF0182 protein FRAAL6027 from Frankia alni (strain DSM 45986 / CECT 9034 / ACN14a).